Consider the following 423-residue polypeptide: MQYKDENGVNEPSRRRLLKVIGALALAGSCPVAHAQKTQSAPGTLSPDARNEKQPFYGEHQAGILTPQQAAMMLVAFDVLASDKADLERLFRLLTQRFAFLTQGGAAPETPNPRLPPLDSGILGGYIAPDNLTITLSVGHSLFDERFGLAPQMPKKLQKMTRFPNDSLDAALCHGDVLLQICANTQDTVIHALRDIIKHTPDLLSVRWKREGFISDHAARSKGKETPINLLGFKDGTANPDSQNDKLMQKVVWVTADQQEPAWTIGGSYQAVRLIQFRVEFWDRTPLKEQQTIFGRDKQTGAPLGMQHEHDVPDYASDPEGKVIALDSHIRLANPRTAESESSLMLRRGYSYSLGVTNSGQLDMGLLFVCYQHDLEKGFLTVQKRLNGEALEEYVKPIGGGYFFALPGVKDANDYFGSALLRV.

A signal peptide (tat-type signal) is located at residues 1-35 (MQYKDENGVNEPSRRRLLKVIGALALAGSCPVAHA). 236 to 238 (GTA) lines the heme b pocket. Protoporphyrin IX-binding positions include 236–238 (GTA) and Arg-296. Heme b contacts are provided by residues His-329, 334–336 (NPR), and Arg-347.

As to quaternary structure, homodimer. Part of a ferrous iron transporter composed of EfeU, EfeO and EfeB. However, this EfeUOB tripartite iron transporter is defective in E.coli strain K12 due to a frameshift mutation in EfeU. Requires heme b as cofactor. Exported by the Tat system. The position of the signal peptide cleavage has been experimentally proven. Can also be exported by the Sec system.

The protein localises to the periplasm. The enzyme catalyses heme b + 2 H(+) = protoporphyrin IX + Fe(2+). Its function is as follows. Involved in the recovery of exogenous heme iron. Extracts iron from heme while preserving the protoporphyrin ring intact. Also displays peroxidase activity on guaiacol in vitro. This Escherichia coli (strain K12) protein is Deferrochelatase (efeB).